A 397-amino-acid polypeptide reads, in one-letter code: Lysophospholipid transporter LplT (397 aa).

The Periplasmic portion of the chain corresponds to 1–17 (MSESVHTNTSLWSKGMK). The helical transmembrane segment at 18–38 (AVIVAQFLSAFGDNALLFATL) threads the bilayer. Residues 39–52 (ALLKAQFYPEWSQP) are Cytoplasmic-facing. A helical membrane pass occupies residues 53 to 73 (ILQMVFVGAYILFAPFVGQVA). Residues 74–90 (DSFAKGRVMMFANGLKL) lie on the Periplasmic side of the membrane. A helical transmembrane segment spans residues 91–111 (LGAASICFGINPFLGYTLVGV). At 112–144 (GAAAYSPAKYGILGELTTGSKLVKANGLMEAST) the chain is on the cytoplasmic side. Residues 145 to 165 (IAAILLGSVAGGVLADWHVLV) traverse the membrane as a helical segment. Residue Ala-166 is a topological domain, periplasmic. Residues 167–187 (LAACALAYGGAVVANIYIPKL) traverse the membrane as a helical segment. The Cytoplasmic portion of the chain corresponds to 188–226 (AAARPGQSWNLINMTRSFLNACTSLWRNGETRFSLVGTS). The helical transmembrane segment at 227–247 (LFWGAGVTLRFLLVLWVPVAL) threads the bilayer. Residues 248–256 (GITDNSTPT) lie on the Periplasmic side of the membrane. The chain crosses the membrane as a helical span at residues 257–277 (YLNAMVAIGIVVGAGAAAKLV). Over 278–280 (TLE) the chain is Cytoplasmic. The helical transmembrane segment at 281–301 (TVSRCMPAGILIGVVVLIFSL) threads the bilayer. The Periplasmic portion of the chain corresponds to 302-304 (QHE). A helical membrane pass occupies residues 305–325 (LLPAYALLMLIGVMGGFFVVP). At 326–343 (LNALLQERGKKSVGAGNA) the chain is on the cytoplasmic side. The helical transmembrane segment at 344–364 (IAVQNLGENSAMLLMLGIYSL) threads the bilayer. The Periplasmic segment spans residues 365-366 (AV). The helical transmembrane segment at 367-387 (MVGIPVVPIGIGFGALFALAI) threads the bilayer. The Cytoplasmic segment spans residues 388-397 (TALWIWQRRH).

The protein belongs to the major facilitator superfamily. LplT (TC 2.A.1.42) family.

It is found in the cell inner membrane. Its function is as follows. Catalyzes the facilitated diffusion of 2-acyl-glycero-3-phosphoethanolamine (2-acyl-GPE) into the cell. This chain is Lysophospholipid transporter LplT, found in Shigella boydii serotype 4 (strain Sb227).